Here is a 208-residue protein sequence, read N- to C-terminus: Large ribosomal subunit protein uL3 (208 aa).

Residue glutamine 149 is modified to N5-methylglutamine.

This sequence belongs to the universal ribosomal protein uL3 family. In terms of assembly, part of the 50S ribosomal subunit. Forms a cluster with proteins L14 and L19. Post-translationally, methylated by PrmB.

Its function is as follows. One of the primary rRNA binding proteins, it binds directly near the 3'-end of the 23S rRNA, where it nucleates assembly of the 50S subunit. The sequence is that of Large ribosomal subunit protein uL3 from Actinobacillus succinogenes (strain ATCC 55618 / DSM 22257 / CCUG 43843 / 130Z).